The primary structure comprises 466 residues: Signal recognition particle 54 kDa protein (466 aa).

Residues 104–111, 184–188, and 242–245 each bind GTP; these read GLQGSGKT, DTAGR, and TKLD. Residues 446-466 are disordered; the sequence is QQQGGGGMGGLGGGGGLGPFG. Positions 448–466 are enriched in gly residues; it reads QGGGGMGGLGGGGGLGPFG.

It belongs to the GTP-binding SRP family. SRP54 subfamily. In terms of assembly, part of the signal recognition particle protein translocation system, which is composed of SRP and FtsY. Archaeal SRP consists of a 7S RNA molecule of 300 nucleotides and two protein subunits: SRP54 and SRP19.

The protein resides in the cytoplasm. The catalysed reaction is GTP + H2O = GDP + phosphate + H(+). Functionally, involved in targeting and insertion of nascent membrane proteins into the cytoplasmic membrane. Binds to the hydrophobic signal sequence of the ribosome-nascent chain (RNC) as it emerges from the ribosomes. The SRP-RNC complex is then targeted to the cytoplasmic membrane where it interacts with the SRP receptor FtsY. The chain is Signal recognition particle 54 kDa protein from Haloquadratum walsbyi (strain DSM 16790 / HBSQ001).